The sequence spans 323 residues: Ferrochelatase (323 aa).

2 residues coordinate Fe cation: His-195 and Glu-276.

The protein belongs to the ferrochelatase family.

The protein localises to the cytoplasm. The enzyme catalyses heme b + 2 H(+) = protoporphyrin IX + Fe(2+). It functions in the pathway porphyrin-containing compound metabolism; protoheme biosynthesis; protoheme from protoporphyrin-IX: step 1/1. In terms of biological role, catalyzes the ferrous insertion into protoporphyrin IX. This is Ferrochelatase from Mannheimia succiniciproducens (strain KCTC 0769BP / MBEL55E).